A 469-amino-acid chain; its full sequence is Programmed cell death protein 4 (469 aa).

At Met1 the chain carries N-acetylmethionine. 2 disordered regions span residues 1-38 (MDVE…EIKN) and 58-128 (KAKR…GTPG). A Phosphoserine modification is found at Ser25. The Nuclear localization signal signature appears at 58–64 (KAKRRLR). At Ser67 the chain carries Phosphoserine; by PKB and RPS6KB1. Phosphoserine occurs at positions 68, 71, 76, 78, 80, and 94. Positions 70 to 76 (DSGRGDS) match the Phosphodegron motif. The segment covering 74–83 (GDSVSDSGSD) has biased composition (low complexity). The span at 114–125 (KKGGAGGKGVWG) shows a compositional bias: gly residues. Tyr152 carries the phosphotyrosine modification. In terms of domain architecture, MI 1 spans 163 to 284 (AFEKTLTPII…CNTYIDSYKG (122 aa)). A Nuclear localization signal motif is present at residues 241-250 (DKLLKDLPEL). Residues Ser313 and Ser317 each carry the phosphoserine modification. The region spanning 326–449 (HLVKEIDMLL…SKQLRDLCPS (124 aa)) is the MI 2 domain. At Ser457 the chain carries Phosphoserine; by PKB.

The protein belongs to the PDCD4 family. In terms of assembly, interacts (via MI domains) with EIF4A2. Interacts (via MI domains) with EIF4A1 (via N-terminal domain). Heterotrimer with EIF4A1; one molecule of PDCD4 binds two molecules of EIF4A1. Interacts with EIF4G1. May form a complex with EIF4A1 and EIF4G1. The interaction between PDCD4 and EIF4A1 interferes with the interaction between EIF4A1 and EIF4G. When phosphorylated, interacts with BTRC and FBXW11. Polyubiquitinated, leading to its proteasomal degradation. Rapidly degraded in response to mitogens. Phosphorylation of the phosphodegron promotes interaction with BTRC and proteasomal degradation. Post-translationally, phosphorylated at Ser-67 by RPS6KB1 in response to mitogens; phosphorylation promotes proteasomal degradation of PDCD4. In terms of tissue distribution, up-regulated in proliferative cells. Highly expressed in epithelial cells of the mammary gland. Reduced expression in lung cancer and colon carcinoma.

It localises to the nucleus. Its subcellular location is the cytoplasm. In terms of biological role, inhibits translation initiation and cap-dependent translation. May excert its function by hindering the interaction between EIF4A1 and EIF4G. Inhibits the helicase activity of EIF4A. Modulates the activation of JUN kinase. Down-regulates the expression of MAP4K1, thus inhibiting events important in driving invasion, namely, MAPK85 activation and consequent JUN-dependent transcription. May play a role in apoptosis. Tumor suppressor. Inhibits tumor promoter-induced neoplastic transformation. Binds RNA. In Homo sapiens (Human), this protein is Programmed cell death protein 4 (PDCD4).